Reading from the N-terminus, the 815-residue chain is DNA gyrase subunit B (815 aa).

Residues 1 to 21 (MEKTPATGSAVAPPPVEYGTD) are disordered. The region spanning 430–545 (SELYIVEGDS…AISTSRSRRS (116 aa)) is the Toprim domain. Mg(2+)-binding residues include glutamate 436, aspartate 509, and aspartate 511.

Belongs to the type II topoisomerase GyrB family. In terms of assembly, heterotetramer, composed of two GyrA and two GyrB chains. In the heterotetramer, GyrA contains the active site tyrosine that forms a transient covalent intermediate with DNA, while GyrB binds cofactors and catalyzes ATP hydrolysis. Mg(2+) is required as a cofactor. Mn(2+) serves as cofactor. Requires Ca(2+) as cofactor.

The protein localises to the cytoplasm. The catalysed reaction is ATP-dependent breakage, passage and rejoining of double-stranded DNA.. Its function is as follows. A type II topoisomerase that negatively supercoils closed circular double-stranded (ds) DNA in an ATP-dependent manner to modulate DNA topology and maintain chromosomes in an underwound state. Negative supercoiling favors strand separation, and DNA replication, transcription, recombination and repair, all of which involve strand separation. Also able to catalyze the interconversion of other topological isomers of dsDNA rings, including catenanes and knotted rings. Type II topoisomerases break and join 2 DNA strands simultaneously in an ATP-dependent manner. The protein is DNA gyrase subunit B of Myxococcus xanthus.